A 272-amino-acid chain; its full sequence is Putative B3 domain-containing protein Os02g0455900 (272 aa).

Residues 30 to 134 (GKVLMPSDVS…RFFICCRCTC (105 aa)) constitute a DNA-binding region (TF-B3). Residues 189 to 227 (TASLGCAAAQPPQVPPTPTPRRRRRSMMVHPEPPEHTTD) are disordered.

The protein localises to the nucleus. This chain is Putative B3 domain-containing protein Os02g0455900, found in Oryza sativa subsp. japonica (Rice).